The sequence spans 331 residues: Phosphoenolpyruvate transferase (331 aa).

A 7,8-didemethyl-8-hydroxy-5-deazariboflavin-binding site is contributed by aspartate 63.

The protein belongs to the CofD family. Homodimer. Mg(2+) is required as a cofactor.

It carries out the reaction enolpyruvoyl-2-diphospho-5'-guanosine + 7,8-didemethyl-8-hydroxy-5-deazariboflavin = dehydro coenzyme F420-0 + GMP + H(+). It functions in the pathway cofactor biosynthesis; coenzyme F420 biosynthesis. Catalyzes the transfer of the phosphoenolpyruvate moiety from enoylpyruvoyl-2-diphospho-5'-guanosine (EPPG) to 7,8-didemethyl-8-hydroxy-5-deazariboflavin (FO) with the formation of dehydro coenzyme F420-0 and GMP. This is Phosphoenolpyruvate transferase from Mycobacterium bovis (strain ATCC BAA-935 / AF2122/97).